The sequence spans 252 residues: Small ribosomal subunit protein uS3 (252 aa).

The 73-residue stretch at 39–111 folds into the KH type-2 domain; that stretch reads IRKLINNFTK…DVNLNVLEVK (73 aa). Residues 222-252 are disordered; that stretch reads KPFASQSSNTPNRRPRNFKGGNNNHVNAKKN. Polar residues predominate over residues 241–252; sequence GGNNNHVNAKKN.

This sequence belongs to the universal ribosomal protein uS3 family. In terms of assembly, part of the 30S ribosomal subunit. Forms a tight complex with proteins S10 and S14.

Binds the lower part of the 30S subunit head. Binds mRNA in the 70S ribosome, positioning it for translation. The polypeptide is Small ribosomal subunit protein uS3 (Onion yellows phytoplasma (strain OY-M)).